The following is a 288-amino-acid chain: Bifunctional protein FolD (288 aa).

Residues 166 to 168 (GAS) and isoleucine 232 contribute to the NADP(+) site.

It belongs to the tetrahydrofolate dehydrogenase/cyclohydrolase family. Homodimer.

It catalyses the reaction (6R)-5,10-methylene-5,6,7,8-tetrahydrofolate + NADP(+) = (6R)-5,10-methenyltetrahydrofolate + NADPH. The enzyme catalyses (6R)-5,10-methenyltetrahydrofolate + H2O = (6R)-10-formyltetrahydrofolate + H(+). It functions in the pathway one-carbon metabolism; tetrahydrofolate interconversion. Functionally, catalyzes the oxidation of 5,10-methylenetetrahydrofolate to 5,10-methenyltetrahydrofolate and then the hydrolysis of 5,10-methenyltetrahydrofolate to 10-formyltetrahydrofolate. This Klebsiella pneumoniae (strain 342) protein is Bifunctional protein FolD.